Consider the following 462-residue polypeptide: GTPase Der (462 aa).

EngA-type G domains follow at residues Lys-9 to Gln-171 and Ile-201 to Ser-372. GTP is bound by residues Gly-15–Ser-22, Asp-62–Met-66, Asn-123–Asp-126, Gly-207–Ser-214, Asp-254–Ile-258, and Asn-318–Asp-321. Positions Lys-373–Lys-457 constitute a KH-like domain.

This sequence belongs to the TRAFAC class TrmE-Era-EngA-EngB-Septin-like GTPase superfamily. EngA (Der) GTPase family. In terms of assembly, associates with the 50S ribosomal subunit.

Its function is as follows. GTPase that plays an essential role in the late steps of ribosome biogenesis. The protein is GTPase Der of Helicobacter pylori (strain P12).